A 353-amino-acid chain; its full sequence is Photosystem II D2 protein (353 aa).

An N-acetylthreonine modification is found at threonine 2. At threonine 2 the chain carries Phosphothreonine. The chain crosses the membrane as a helical span at residues 41–61; the sequence is CAYFALGGWFTGTTFVTSWYT. Histidine 118 lines the chlorophyll a pocket. A helical membrane pass occupies residues 125-141; that stretch reads GFMLRQFELARSVQLRP. Positions 130 and 143 each coordinate pheophytin a. Residues 153-166 form a helical membrane-spanning segment; it reads VFVSVFLIYPLGQS. Histidine 198 lines the chlorophyll a pocket. Residues 208-228 traverse the membrane as a helical segment; it reads AALLCAIHGATVENTLFEDGD. The a plastoquinone site is built by histidine 215 and phenylalanine 262. Histidine 215 contacts Fe cation. Histidine 269 contributes to the Fe cation binding site. The helical transmembrane segment at 279-295 threads the bilayer; sequence GLWMSALGVVGLALNLR.

It belongs to the reaction center PufL/M/PsbA/D family. In terms of assembly, PSII is composed of 1 copy each of membrane proteins PsbA, PsbB, PsbC, PsbD, PsbE, PsbF, PsbH, PsbI, PsbJ, PsbK, PsbL, PsbM, PsbT, PsbX, PsbY, PsbZ, Psb30/Ycf12, at least 3 peripheral proteins of the oxygen-evolving complex and a large number of cofactors. It forms dimeric complexes. The D1/D2 heterodimer binds P680, chlorophylls that are the primary electron donor of PSII, and subsequent electron acceptors. It shares a non-heme iron and each subunit binds pheophytin, quinone, additional chlorophylls, carotenoids and lipids. There is also a Cl(-1) ion associated with D1 and D2, which is required for oxygen evolution. The PSII complex binds additional chlorophylls, carotenoids and specific lipids. serves as cofactor.

The protein resides in the plastid. The protein localises to the chloroplast thylakoid membrane. It carries out the reaction 2 a plastoquinone + 4 hnu + 2 H2O = 2 a plastoquinol + O2. Functionally, photosystem II (PSII) is a light-driven water:plastoquinone oxidoreductase that uses light energy to abstract electrons from H(2)O, generating O(2) and a proton gradient subsequently used for ATP formation. It consists of a core antenna complex that captures photons, and an electron transfer chain that converts photonic excitation into a charge separation. The D1/D2 (PsbA/PsbD) reaction center heterodimer binds P680, the primary electron donor of PSII as well as several subsequent electron acceptors. D2 is needed for assembly of a stable PSII complex. This Chloranthus spicatus (Chulantree) protein is Photosystem II D2 protein.